A 637-amino-acid chain; its full sequence is Interleukin-17 receptor E (637 aa).

The N-terminal stretch at 1 to 23 (MGSPRLAALLLSLPLLLIGLAVS) is a signal peptide. The Extracellular segment spans residues 24-414 (ARVACPCLRS…VLCPDVSHRH (391 aa)). Residues 87-134 (GSPSLSEESHRISIPSSAISHRGQRTKRAQPSAAEGREHLPEAGSQKC) form a disordered region. Residues asparagine 278 and asparagine 307 are each glycosylated (N-linked (GlcNAc...) asparagine). A helical transmembrane segment spans residues 415–435 (LGLLILALLALTALVGVVLVL). Over 436–637 (LGRRLLPGSG…TNSPCGFSCL (202 aa)) the chain is Cytoplasmic. Residues 447-583 (TRPVLLLHAA…LLRDLPRLLR (137 aa)) enclose the SEFIR domain.

Forms heterodimers with IL17RA; the heterodimer binds IL17C. In terms of tissue distribution, predominantly expressed in mucosal tissues, including trachea, lung, kidney and stomach. Highly expressed in colon epithelial cells. Also expressed in testis. Low expression, if any, in heart, liver, spleen, or brain. Among CD4 T-helper cells, expressed at high levels in Th17 cells.

The protein localises to the cell membrane. Its subcellular location is the secreted. It is found in the cytoplasm. Functionally, specific functional receptor for IL17C, signaling through the NF-kappa-B and MAPK pathways. Requires TRAF3IP2 /ACT1 for signaling. Crucial regulator in innate immunity to bacterial pathogens, such as Citrobacter rodentium. Isoform 4 and isoform 5 may be either cytoplasmic inactive or dominant active forms. Isoform 2 and isoform 3 may act as soluble decoy receptors. The sequence is that of Interleukin-17 receptor E (Il17re) from Mus musculus (Mouse).